The sequence spans 493 residues: Galactose-1-phosphate uridylyltransferase (493 aa).

The protein belongs to the galactose-1-phosphate uridylyltransferase type 2 family.

The protein localises to the cytoplasm. The enzyme catalyses alpha-D-galactose 1-phosphate + UDP-alpha-D-glucose = alpha-D-glucose 1-phosphate + UDP-alpha-D-galactose. It functions in the pathway carbohydrate metabolism; galactose metabolism. This is Galactose-1-phosphate uridylyltransferase from Lactococcus lactis subsp. cremoris (strain MG1363).